The primary structure comprises 370 residues: Death-associated protein kinase 2 (370 aa).

The region spanning 23–285 (YDIGEELGSG…IQEALRHPWI (263 aa)) is the Protein kinase domain. ATP-binding positions include 29–37 (LGSGQFAIV) and Lys-52. Catalysis depends on Asp-149, which acts as the Proton acceptor. The calmodulin-binding stretch occupies residues 287 to 354 (PVDTQQAMVR…RNCESDTEEN (68 aa)). The autoinhibitory domain stretch occupies residues 292 to 301 (QAMVRRESVV). Residue Ser-299 is modified to Phosphoserine. A Phosphoserine; by autocatalysis modification is found at Ser-318. At Ser-349 the chain carries Phosphoserine. Thr-369 bears the Phosphothreonine mark.

Belongs to the protein kinase superfamily. CAMK Ser/Thr protein kinase family. DAP kinase subfamily. In terms of assembly, homodimer in its autoinhibited state. Active as monomer. Interacts with 14-3-3 proteins YWHAB, YWHAE, YWHAG, YWHAH, YWHAQ, YWHAZ and SFN; the interaction requires DAPK2 phosphorylation at Thr-369 and suppresses DAPK2 kinase activity and DAPK2-induced apoptosis. Mg(2+) is required as a cofactor. Post-translationally, autophosphorylation at Ser-318 inhibits its catalytic activity. Dephosphorylated at Ser-318 in response to activated Fas and TNF-alpha receptors. In terms of tissue distribution, expressed in peritubular interstitial cells of the renal cortex. Isoform 1 is found in the adult brain while isoform 2 is expressed in brains of embryos and young mice (at protein level).

The protein resides in the cytoplasm. The protein localises to the cytoplasmic vesicle. It is found in the autophagosome lumen. The catalysed reaction is L-seryl-[protein] + ATP = O-phospho-L-seryl-[protein] + ADP + H(+). It carries out the reaction L-threonyl-[protein] + ATP = O-phospho-L-threonyl-[protein] + ADP + H(+). With respect to regulation, activated by Ca(2+)/calmodulin. Regulated by a double locking mechanism, involving autophosphorylation at Ser-318, calmodulin binding, and dimerization. In the inactive state, Ser-318 is phosphorylated, and the kinase is dimeric. Activation involves: dephosphorylation at Ser-318, release-of-autoinhibition mechanism where calmodulin binding induces a conformational change that relieves the steric block of the active site by the autoinhibitory domain, and generation of the monomeric active form of the kinase. In terms of biological role, calcium/calmodulin-dependent serine/threonine kinase involved in multiple cellular signaling pathways that trigger cell survival, apoptosis, and autophagy. Capable of regulating both type I apoptotic and type II autophagic cell death signals. The former involves caspase activation, chromatin and mitochondrial condensation while the latter involves caspase-independent cell death in conjunction with accumulation of mature autophagic vesicles, plasma membrane blebs, and nuclear condensation without DNA degradation. Mediator of anoikis and a suppressor of beta-catenin-dependent anchorage-independent growth of malignant epithelial cells. May play a role in granulocytic maturation. Regulates granulocytes motility by controlling cell spreading and polarization. In Mus musculus (Mouse), this protein is Death-associated protein kinase 2 (Dapk2).